A 193-amino-acid chain; its full sequence is Ion-translocating oxidoreductase complex subunit A (193 aa).

The next 6 membrane-spanning stretches (helical) occupy residues 5 to 25 (LLLLIGTVLVNNFVLVKFLGL), 39 to 59 (IGMGLATTFVLTLASVCAYLV), 67 to 87 (LGIEYLRTMSFILVIAVVVQF), 102 to 122 (LLGIFLPLITTNCAVLGVALL), 134 to 154 (IIYGFGAAVGFSLVLILFASM), and 171 to 191 (SIAMITAGLMSLAFMGFTGLV).

The protein belongs to the NqrDE/RnfAE family. The complex is composed of six subunits: RnfA, RnfB, RnfC, RnfD, RnfE and RnfG.

It localises to the cell inner membrane. Functionally, part of a membrane-bound complex that couples electron transfer with translocation of ions across the membrane. This Vibrio cholerae serotype O1 (strain ATCC 39315 / El Tor Inaba N16961) protein is Ion-translocating oxidoreductase complex subunit A.